The chain runs to 407 residues: Probable tRNA pseudouridine synthase D (407 aa).

D81 serves as the catalytic Nucleophile. One can recognise a TRUD domain in the interval 151 to 372; it reads GFPNYFGIQR…PGGRRELLIR (222 aa).

This sequence belongs to the pseudouridine synthase TruD family.

It carries out the reaction uridine(13) in tRNA = pseudouridine(13) in tRNA. In terms of biological role, could be responsible for synthesis of pseudouridine from uracil-13 in transfer RNAs. This is Probable tRNA pseudouridine synthase D from Pyrococcus furiosus (strain ATCC 43587 / DSM 3638 / JCM 8422 / Vc1).